Reading from the N-terminus, the 96-residue chain is Protein Vpr (96 aa).

Residues 1–42 (MEQAPEDQGPQREPYNEWTLELLEELKSEAVRHFPRLWLHSL) are homooligomerization. A phosphoserine; by host mark is found at Ser79, Ser94, and Ser96.

It belongs to the HIV-1 VPR protein family. In terms of assembly, homooligomer, may form homodimer. Interacts with p6-gag region of the Pr55 Gag precursor protein through a (Leu-X-X)4 motif near the C-terminus of the P6gag protein. Interacts with host UNG. May interact with host RAD23A/HHR23A. Interacts with host VPRBP/DCAF1, leading to hijack the CUL4A-RBX1-DDB1-DCAF1/VPRBP complex, mediating ubiquitination of host proteins such as TERT and ZGPAT and arrest of the cell cycle in G2 phase. Phosphorylated on several residues by host. These phosphorylations regulate VPR activity for the nuclear import of the HIV-1 pre-integration complex.

It is found in the virion. The protein localises to the host nucleus. Its subcellular location is the host extracellular space. In terms of biological role, during virus replication, may deplete host UNG protein, and incude G2-M cell cycle arrest. Acts by targeting specific host proteins for degradation by the 26S proteasome, through association with the cellular CUL4A-DDB1 E3 ligase complex by direct interaction with host VPRPB/DCAF-1. Cell cycle arrest reportedly occurs within hours of infection and is not blocked by antiviral agents, suggesting that it is initiated by the VPR carried into the virion. Additionally, VPR induces apoptosis in a cell cycle dependent manner suggesting that these two effects are mechanistically linked. Detected in the serum and cerebrospinal fluid of AIDS patient, VPR may also induce cell death to bystander cells. Its function is as follows. During virus entry, plays a role in the transport of the viral pre-integration (PIC) complex to the host nucleus. This function is crucial for viral infection of non-dividing macrophages. May act directly at the nuclear pore complex, by binding nucleoporins phenylalanine-glycine (FG)-repeat regions. This is Protein Vpr from Human immunodeficiency virus type 1 group M subtype B (isolate RF/HAT3) (HIV-1).